A 438-amino-acid polypeptide reads, in one-letter code: Coenzyme A disulfide reductase (438 aa).

Residue 8–33 (GAVAGGATCASQIRRLDKESDIIIFE) coordinates FAD. Thr15, Gln19, Arg22, Ser39, and Asn42 together coordinate substrate. Residue Cys43 is the Nucleophile of the active site. The active-site Redox-active is Cys43. Lys71 contributes to the substrate binding site. Residue 151-166 (VLVVGAGYVSLEVLEN) participates in NADP(+) binding. 267 to 277 (TNVPNIYVIGD) is an FAD binding site. His299 contacts substrate. Tyr419 contacts FAD. Lys427 serves as a coordination point for substrate.

The protein belongs to the class-III pyridine nucleotide-disulfide oxidoreductase family. Homodimer. FAD is required as a cofactor.

The enzyme catalyses NADP(+) + 2 CoA = CoA-disulfide + NADPH + H(+). Catalyzes specifically the NADPH-dependent reduction of coenzyme A disulfide. The polypeptide is Coenzyme A disulfide reductase (Staphylococcus aureus (strain MRSA252)).